A 200-amino-acid polypeptide reads, in one-letter code: NADH-quinone oxidoreductase subunit C (200 aa).

The protein belongs to the complex I 30 kDa subunit family. In terms of assembly, NDH-1 is composed of 14 different subunits. Subunits NuoB, C, D, E, F, and G constitute the peripheral sector of the complex.

The protein resides in the cell inner membrane. The enzyme catalyses a quinone + NADH + 5 H(+)(in) = a quinol + NAD(+) + 4 H(+)(out). Functionally, NDH-1 shuttles electrons from NADH, via FMN and iron-sulfur (Fe-S) centers, to quinones in the respiratory chain. The immediate electron acceptor for the enzyme in this species is believed to be ubiquinone. Couples the redox reaction to proton translocation (for every two electrons transferred, four hydrogen ions are translocated across the cytoplasmic membrane), and thus conserves the redox energy in a proton gradient. The protein is NADH-quinone oxidoreductase subunit C of Agrobacterium fabrum (strain C58 / ATCC 33970) (Agrobacterium tumefaciens (strain C58)).